We begin with the raw amino-acid sequence, 443 residues long: Transcriptional adapter 2-alpha (443 aa).

Ser6 carries the post-translational modification Phosphoserine. The ZZ-type zinc-finger motif lies at 12-69 (SDKPPCRGCSSYLMEPYIKCAECGPPPFFLCLQCFTRGFEYKKHQSDHTYEIMTSDFP). Zn(2+)-binding residues include Cys17, Cys20, Cys31, Cys34, Cys42, Cys45, His55, and His59. The SANT domain maps to 70 to 122 (VLDPSWTAQEEMALLEAVMDCGFGNWQDVANQMCTKTKEECEKHYMKHFINNP). Residues Lys132 and Lys138 each participate in a glycyl lysine isopeptide (Lys-Gly) (interchain with G-Cter in SUMO2) cross-link. Residues 347 to 359 (LSPSVPMTSNSGR) show a composition bias toward polar residues. Residues 347 to 372 (LSPSVPMTSNSGRRSAPPLNLTGLPG) form a disordered region. The SWIRM domain maps to 356–443 (NSGRRSAPPL…LIREGYITKA (88 aa)). Residues 426-435 (KTRKIYDFLI) mediate DNA binding.

As to quaternary structure, interacts with GCN5 and NR3C1. Associated with the P/CAF protein in the PCAF complex. Component of the PCAF complex, at least composed of TADA2L/ADA2, TADA3L/ADA3, TAF5L/PAF65-beta, TAF6L/PAF65-alpha, TAF10/TAFII30, TAF12/TAFII20, TAF9/TAFII31 and TRRAP. Component of the ADA2A-containing complex (ATAC), composed of KAT14, KAT2A, TADA2L, TADA3L, ZZ3, MBIP, WDR5, YEATS2, CCDC101 and DR1. Interacts with CCDC134.

Its subcellular location is the nucleus. It localises to the chromosome. In terms of biological role, component of the ATAC complex, a complex with histone acetyltransferase activity on histones H3 and H4. Required for the function of some acidic activation domains, which activate transcription from a distant site. Binds double-stranded DNA. Binds dinucleosomes, probably at the linker region between neighboring nucleosomes. Plays a role in chromatin remodeling. May promote TP53/p53 'Lys-321' acetylation, leading to reduced TP53 stability and transcriptional activity. May also promote XRCC6 acetylation thus facilitating cell apoptosis in response to DNA damage. This chain is Transcriptional adapter 2-alpha (TADA2A), found in Bos taurus (Bovine).